The sequence spans 264 residues: 2-dehydro-3-deoxy-D-gluconate 5-dehydrogenase (264 aa).

NAD(+) is bound at residue 14–38 (LVTGSTHGLGMAMAKGLGLAGATIV). S147 provides a ligand contact to substrate. Catalysis depends on Y160, which acts as the Proton acceptor.

This sequence belongs to the short-chain dehydrogenases/reductases (SDR) family. As to quaternary structure, homotetramer.

The protein localises to the cytoplasm. It carries out the reaction 2-dehydro-3-deoxy-D-gluconate + NAD(+) = 3-deoxy-D-glycero-2,5-hexodiulosonate + NADH + H(+). Functionally, 2-dehydro-3-deoxy-D-gluconate 5-dehydrogenase involved in ulvan degradation. Ulvan is the main polysaccharide component of the Ulvales (green seaweed) cell wall. It is composed of disaccharide building blocks comprising 3-sulfated rhamnose (Rha3S) linked to D-glucuronic acid (GlcA), L-iduronic acid (IduA), or D-xylose (Xyl). Catalyzes the reversible reduction of 2,5-diketo-3-deoxygluconate (DKII or 4,6-dihydroxy-2,5-dioxohexanoate) into 2-keto-3-deoxygluconate (KDG or 2-dehydro-3-deoxygluconate) with a concomitant oxidation of NADH. The protein is 2-dehydro-3-deoxy-D-gluconate 5-dehydrogenase (kduD) of Formosa agariphila (strain DSM 15362 / KCTC 12365 / LMG 23005 / KMM 3901 / M-2Alg 35-1).